Consider the following 377-residue polypeptide: Glutamate 5-kinase (377 aa).

Lys22 serves as a coordination point for ATP. Residues Ser62, Asp149, and Asn161 each coordinate substrate. ATP is bound by residues Thr181–Asp182 and Thr223–Lys229. The 79-residue stretch at Arg285–Gln363 folds into the PUA domain.

Belongs to the glutamate 5-kinase family.

It localises to the cytoplasm. It catalyses the reaction L-glutamate + ATP = L-glutamyl 5-phosphate + ADP. The protein operates within amino-acid biosynthesis; L-proline biosynthesis; L-glutamate 5-semialdehyde from L-glutamate: step 1/2. Functionally, catalyzes the transfer of a phosphate group to glutamate to form L-glutamate 5-phosphate. The sequence is that of Glutamate 5-kinase from Bifidobacterium longum subsp. infantis (strain ATCC 15697 / DSM 20088 / JCM 1222 / NCTC 11817 / S12).